A 465-amino-acid chain; its full sequence is Cystathionine beta-lyase (465 aa).

Lys-213 bears the N6-(pyridoxal phosphate)lysine mark.

It belongs to the trans-sulfuration enzymes family. Requires pyridoxal 5'-phosphate as cofactor.

It localises to the cytoplasm. The protein localises to the nucleus. It catalyses the reaction L,L-cystathionine + H2O = L-homocysteine + pyruvate + NH4(+). The enzyme catalyses an S-substituted L-cysteine + H2O = a thiol + pyruvate + NH4(+). The protein operates within amino-acid biosynthesis; L-methionine biosynthesis via de novo pathway; L-homocysteine from L-cystathionine: step 1/1. The chain is Cystathionine beta-lyase (STR3) from Saccharomyces cerevisiae (strain ATCC 204508 / S288c) (Baker's yeast).